The primary structure comprises 120 residues: Large ribosomal subunit protein uL22 (120 aa).

Residues 1–20 (MFVNRRYTARGKNLPSSPKK) form a disordered region.

It belongs to the universal ribosomal protein uL22 family. In terms of assembly, part of the 50S ribosomal subunit.

Functionally, this protein binds specifically to 23S rRNA; its binding is stimulated by other ribosomal proteins, e.g. L4, L17, and L20. It is important during the early stages of 50S assembly. It makes multiple contacts with different domains of the 23S rRNA in the assembled 50S subunit and ribosome. In terms of biological role, the globular domain of the protein is located near the polypeptide exit tunnel on the outside of the subunit, while an extended beta-hairpin is found that lines the wall of the exit tunnel in the center of the 70S ribosome. This chain is Large ribosomal subunit protein uL22, found in Borrelia hermsii (strain HS1 / DAH).